Consider the following 874-residue polypeptide: Alanine--tRNA ligase (874 aa).

Positions 564, 568, 665, and 669 each coordinate Zn(2+).

It belongs to the class-II aminoacyl-tRNA synthetase family. The cofactor is Zn(2+).

It is found in the cytoplasm. It catalyses the reaction tRNA(Ala) + L-alanine + ATP = L-alanyl-tRNA(Ala) + AMP + diphosphate. Catalyzes the attachment of alanine to tRNA(Ala) in a two-step reaction: alanine is first activated by ATP to form Ala-AMP and then transferred to the acceptor end of tRNA(Ala). Also edits incorrectly charged Ser-tRNA(Ala) and Gly-tRNA(Ala) via its editing domain. In Delftia acidovorans (strain DSM 14801 / SPH-1), this protein is Alanine--tRNA ligase.